The sequence spans 71 residues: MSRLFMILLVICVITLGTDASQAEDSGTEKRSWPVPDAFLKAFQSWPLTDPDLKAGFKVNSAQRVAHGYGK.

Residues 1–20 (MSRLFMILLVICVITLGTDA) form the signal peptide. Residues 21–31 (SQAEDSGTEKR) constitute a propeptide that is removed on maturation. Position 69 is a tyrosine amide (tyrosine 69).

The protein belongs to the conotoxin NSf-1 superfamily. Expressed by the venom duct.

It is found in the secreted. Functionally, probable neurotoxin with unknown target. Possibly targets ion channels. The chain is Conotoxin Pl071 from Conus planorbis (Planorbis cone).